Here is a 302-residue protein sequence, read N- to C-terminus: Protein FdhE homolog (302 aa).

This sequence belongs to the FdhE family.

The protein resides in the cytoplasm. Necessary for formate dehydrogenase activity. This Haemophilus influenzae (strain PittEE) protein is Protein FdhE homolog.